A 78-amino-acid polypeptide reads, in one-letter code: Acyl carrier protein (78 aa).

Residues 4–78 (AEIRDKVYDI…QQAIDYIVKK (75 aa)) form the Carrier domain. Position 39 is an O-(pantetheine 4'-phosphoryl)serine (Ser-39).

The protein belongs to the acyl carrier protein (ACP) family. In terms of processing, 4'-phosphopantetheine is transferred from CoA to a specific serine of apo-ACP by AcpS. This modification is essential for activity because fatty acids are bound in thioester linkage to the sulfhydryl of the prosthetic group.

The protein resides in the cytoplasm. It functions in the pathway lipid metabolism; fatty acid biosynthesis. Carrier of the growing fatty acid chain in fatty acid biosynthesis. The protein is Acyl carrier protein of Chlorobium luteolum (strain DSM 273 / BCRC 81028 / 2530) (Pelodictyon luteolum).